A 429-amino-acid polypeptide reads, in one-letter code: Ribosomal RNA small subunit methyltransferase B (429 aa).

S-adenosyl-L-methionine contacts are provided by residues 254-260 (CAAPGGK), Asp-277, Asp-303, and Asp-322. Catalysis depends on Cys-375, which acts as the Nucleophile.

The protein belongs to the class I-like SAM-binding methyltransferase superfamily. RsmB/NOP family.

The protein resides in the cytoplasm. The catalysed reaction is cytidine(967) in 16S rRNA + S-adenosyl-L-methionine = 5-methylcytidine(967) in 16S rRNA + S-adenosyl-L-homocysteine + H(+). Functionally, specifically methylates the cytosine at position 967 (m5C967) of 16S rRNA. The protein is Ribosomal RNA small subunit methyltransferase B of Escherichia coli O157:H7.